The sequence spans 348 residues: Protein RecA (348 aa).

65 to 72 serves as a coordination point for ATP; sequence GPESSGKT.

This sequence belongs to the RecA family.

It localises to the cytoplasm. In terms of biological role, can catalyze the hydrolysis of ATP in the presence of single-stranded DNA, the ATP-dependent uptake of single-stranded DNA by duplex DNA, and the ATP-dependent hybridization of homologous single-stranded DNAs. It interacts with LexA causing its activation and leading to its autocatalytic cleavage. The polypeptide is Protein RecA (Enterococcus gallinarum).